Reading from the N-terminus, the 198-residue chain is 5'-deoxynucleotidase hdd1 (198 aa).

The region spanning 38–144 (IADHMYRMGI…VKDIDKFEMI (107 aa)) is the HD domain. 7 residues coordinate a divalent metal cation: His41, His69, Asp70, Glu73, Asp78, Ile79, and Asp139.

The protein belongs to the HDDC2 family. As to quaternary structure, homodimer. It depends on Mn(2+) as a cofactor. The cofactor is Co(2+). Requires Mg(2+) as cofactor.

It is found in the cytoplasm. The protein localises to the nucleus. It carries out the reaction a 2'-deoxyribonucleoside 5'-phosphate + H2O = a 2'-deoxyribonucleoside + phosphate. In terms of biological role, catalyzes the dephosphorylation of the nucleoside 5'-monophosphates deoxyadenosine monophosphate (dAMP), deoxycytidine monophosphate (dCMP), deoxyguanosine monophosphate (dGMP) and deoxythymidine monophosphate (dTMP). This is 5'-deoxynucleotidase hdd1 from Schizosaccharomyces pombe (strain 972 / ATCC 24843) (Fission yeast).